A 580-amino-acid chain; its full sequence is 2-succinyl-5-enolpyruvyl-6-hydroxy-3-cyclohexene-1-carboxylate synthase (580 aa).

Belongs to the TPP enzyme family. MenD subfamily. As to quaternary structure, homodimer. Mg(2+) serves as cofactor. Mn(2+) is required as a cofactor. The cofactor is thiamine diphosphate.

It carries out the reaction isochorismate + 2-oxoglutarate + H(+) = 5-enolpyruvoyl-6-hydroxy-2-succinyl-cyclohex-3-ene-1-carboxylate + CO2. Its pathway is quinol/quinone metabolism; 1,4-dihydroxy-2-naphthoate biosynthesis; 1,4-dihydroxy-2-naphthoate from chorismate: step 2/7. The protein operates within quinol/quinone metabolism; menaquinone biosynthesis. Its function is as follows. Catalyzes the thiamine diphosphate-dependent decarboxylation of 2-oxoglutarate and the subsequent addition of the resulting succinic semialdehyde-thiamine pyrophosphate anion to isochorismate to yield 2-succinyl-5-enolpyruvyl-6-hydroxy-3-cyclohexene-1-carboxylate (SEPHCHC). The chain is 2-succinyl-5-enolpyruvyl-6-hydroxy-3-cyclohexene-1-carboxylate synthase from Listeria innocua serovar 6a (strain ATCC BAA-680 / CLIP 11262).